The following is a 355-amino-acid chain: Histidine biosynthesis bifunctional protein HisB (355 aa).

The interval M1–N166 is histidinol-phosphatase. D9 acts as the Nucleophile in catalysis. The Mg(2+) site is built by D9 and D11. D11 (proton donor) is an active-site residue. 4 residues coordinate Zn(2+): C93, H95, C101, and C103. Position 130 (D130) interacts with Mg(2+). Residues R167–L355 are imidazoleglycerol-phosphate dehydratase.

The protein in the N-terminal section; belongs to the histidinol-phosphatase family. This sequence in the C-terminal section; belongs to the imidazoleglycerol-phosphate dehydratase family. It depends on Mg(2+) as a cofactor. The cofactor is Zn(2+).

The protein localises to the cytoplasm. The enzyme catalyses D-erythro-1-(imidazol-4-yl)glycerol 3-phosphate = 3-(imidazol-4-yl)-2-oxopropyl phosphate + H2O. It carries out the reaction L-histidinol phosphate + H2O = L-histidinol + phosphate. It participates in amino-acid biosynthesis; L-histidine biosynthesis; L-histidine from 5-phospho-alpha-D-ribose 1-diphosphate: step 6/9. It functions in the pathway amino-acid biosynthesis; L-histidine biosynthesis; L-histidine from 5-phospho-alpha-D-ribose 1-diphosphate: step 8/9. This Buchnera aphidicola subsp. Schizaphis graminum (strain Sg) protein is Histidine biosynthesis bifunctional protein HisB.